A 1328-amino-acid chain; its full sequence is Protein turtle homolog B (1328 aa).

Residues 1 to 20 form the signal peptide; that stretch reads MIWYVATLIASVISTRGLVA. Topologically, residues 21-722 are extracellular; it reads QVAHGLREEP…DLTDDGLARP (702 aa). Ig-like domains are found at residues 30–115, 139–226, 228–320, 324–415, and 420–504; these read PEFV…ECKV, PTFT…LLVQ, PPFI…AYLT, PARV…ARLV, and PYFT…THLT. Cystine bridges form between Cys-45-Cys-113 and Cys-161-Cys-208. 2 N-linked (GlcNAc...) asparagine glycosylation sites follow: Asn-241 and Asn-258. 3 cysteine pairs are disulfide-bonded: Cys-250-Cys-303, Cys-346-Cys-397, and Cys-442-Cys-488. 2 Fibronectin type-III domains span residues 512–604 and 614–708; these read APGS…TLAF and LVTP…STDI. N-linked (GlcNAc...) asparagine glycosylation occurs at Asn-624. The chain crosses the membrane as a helical span at residues 723–743; the sequence is VLAGIVATICFLAAAILFSTL. Residues 744–1328 lie on the Cytoplasmic side of the membrane; that stretch reads AACFVNKQRK…EPPTTLPTSG (585 aa). Disordered stretches follow at residues 758–817, 914–1040, and 1107–1328; these read RKKD…EKEL, PMSS…PEPW, and SPGR…PTSG. Residues Ser-775, Ser-783, and Ser-794 each carry the phosphoserine modification. A compositionally biased stretch (low complexity) spans 990 to 1001; it reads SPLSSVMSSPPL. 3 stretches are compositionally biased toward polar residues: residues 1018–1033, 1129–1141, and 1199–1214; these read ENASNSTLPLTQTPTG, LVSQGQLRHTSQG, and SRLSPLTQSPLSSRTG. An Omega-N-methylarginine modification is found at Arg-1136. Ser-1207 and Ser-1215 each carry phosphoserine. Residues 1246–1273 are compositionally biased toward low complexity; sequence SFSRKSTPSSTGSPSQSSRSGSPSYRPT. Composition is skewed to pro residues over residues 1284 to 1295 and 1318 to 1328; these read PSPPPGPAPPAP and PEPPTTLPTSG.

This sequence belongs to the immunoglobulin superfamily. Turtle family. In terms of assembly, found in a complex with MAGI2 and NLGN2, where it interacts with MAGI2 (via PDZ 5 and PDZ 6 domains). In terms of processing, N-glycosylated and sialylated. Not significantly O-glycosylated. Detected primarily in brain, including cortex, hippocampus, cerebellum and striatum. Largely restricted to inhibitory GABAergic interneurons (at protein level).

The protein localises to the postsynaptic cell membrane. The protein resides in the postsynaptic density. Its function is as follows. Transmembrane protein which is abundantly expressed in interneurons, where it may regulate inhibitory synapse development. May mediate homophilic cell adhesion. This chain is Protein turtle homolog B, found in Rattus norvegicus (Rat).